The primary structure comprises 804 residues: Probable replication endonuclease from prophage-like region (804 aa).

Active-site O-(5'-phospho-DNA)-tyrosine intermediate residues include Tyr-498 and Tyr-502.

The protein belongs to the phage GPA family.

Possible endonuclease which induces a single-strand cut and initiates DNA replication. This Escherichia coli O6:H1 (strain CFT073 / ATCC 700928 / UPEC) protein is Probable replication endonuclease from prophage-like region.